Here is a 153-residue protein sequence, read N- to C-terminus: Ribosome maturation factor RimP (153 aa).

This sequence belongs to the RimP family.

It localises to the cytoplasm. Its function is as follows. Required for maturation of 30S ribosomal subunits. The chain is Ribosome maturation factor RimP from Picosynechococcus sp. (strain ATCC 27264 / PCC 7002 / PR-6) (Agmenellum quadruplicatum).